The sequence spans 881 residues: EEF1AKMT4-ECE2 readthrough transcript protein (881 aa).

A methyltransferase-like region region spans residues 1-160; it reads MASPRTPVSP…VHTVDQVLSE (160 aa). Residues 1–178 are Cytoplasmic-facing; sequence MASPRTPVSP…QLFGSHTQLE (178 aa). S-adenosyl-L-methionine is bound by residues W26 and Y30. Y39 is subject to Phosphotyrosine. Residues W41, G66, 88–89, 113–114, and K130 each bind S-adenosyl-L-methionine; these read DY and DV. Phosphoserine is present on H174. Residues 179–199 form a helical; Signal-anchor for type II membrane protein membrane-spanning segment; sequence LVLAGLILVLAALLLGCLVAL. At 200-881 the chain is on the lumenal side; that stretch reads WVHRDPAHST…MNPGQLCEVW (682 aa). In terms of domain architecture, Peptidase M13 spans 209 to 881; that stretch reads TCVTEACIRV…MNPGQLCEVW (673 aa). Disulfide bonds link C210-C215, C233-C866, C241-C826, C297-C546, and C755-C878. Residues N277, N281, N322, N382, N427, N494, and N650 are each glycosylated (N-linked (GlcNAc...) asparagine). Residue H718 coordinates Zn(2+). E719 is a catalytic residue. H722 is a Zn(2+) binding site. 2 N-linked (GlcNAc...) asparagine glycosylation sites follow: N743 and N751. E778 contacts Zn(2+). D782 functions as the Proton donor in the catalytic mechanism.

In the N-terminal section; belongs to the methyltransferase superfamily. This sequence in the C-terminal section; belongs to the peptidase M13 family. Zn(2+) is required as a cofactor. As to expression, expressed at high levels in central nervous system. Expressed in adrenal glands, ovary and uterus, and at low levels in heart.

Its subcellular location is the golgi apparatus membrane. The protein localises to the cytoplasmic vesicle. The protein resides in the secretory vesicle membrane. It catalyses the reaction Hydrolysis of the 21-Trp-|-Val-22 bond in big endothelin to form endothelin 1.. Its activity is regulated as follows. Inhibited by phosphoramidon. In terms of biological role, converts big endothelin-1 to endothelin-1. May also have methyltransferase activity. May play a role in amyloid-beta processing. In Mus musculus (Mouse), this protein is EEF1AKMT4-ECE2 readthrough transcript protein.